The primary structure comprises 292 residues: Putative peptidyl-prolyl cis-trans isomerase NifM (292 aa).

A PpiC domain is found at 148 to 243 (HILVTINEDF…IGFHVLYCES (96 aa)).

It belongs to the PpiC/parvulin rotamase family.

It carries out the reaction [protein]-peptidylproline (omega=180) = [protein]-peptidylproline (omega=0). In terms of biological role, required for the activation and stabilization of the iron-component (NifH) of nitrogenase. Probable PPIase. This is Putative peptidyl-prolyl cis-trans isomerase NifM (nifM) from Azotobacter vinelandii.